Consider the following 289-residue polypeptide: Protein shisa-2 homolog (289 aa).

The N-terminal stretch at 1-27 (MWAGCHPDAASLLRLLLAALLAAGALA) is a signal peptide. The Extracellular segment spans residues 28–104 (SGEYCHGWLD…RADKDGPDGS (77 aa)). The disordered stretch occupies residues 81-102 (GCDNDRQQGAGEPGRADKDGPD). Residues 105-125 (AVPIYVPFLIVGSVFVAFIVL) form a helical membrane-spanning segment. The Cytoplasmic portion of the chain corresponds to 126–289 (GSLVAACCCR…EQKMYPAVTV (164 aa)). The tract at residues 162–198 (PSASTSRGSSSRQSSTAASSSSSANSGARAPPTRSQT) is disordered. Positions 163–191 (SASTSRGSSSRQSSTAASSSSSANSGARA) are enriched in low complexity.

This sequence belongs to the shisa family.

Its subcellular location is the endoplasmic reticulum membrane. Functionally, plays an essential role in the maturation of presomitic mesoderm cells by individual attenuation of both FGF and WNT signaling. This is Protein shisa-2 homolog (SHISA2) from Bos taurus (Bovine).